Reading from the N-terminus, the 165-residue chain is UPF0114 protein in repA1-repA2 intergenic region (165 aa).

3 helical membrane passes run Tyr-10–Leu-32, Leu-53–Phe-75, and Asp-134–Ile-156.

This sequence belongs to the UPF0114 family.

It localises to the cell membrane. The chain is UPF0114 protein in repA1-repA2 intergenic region from Buchnera aphidicola subsp. Baizongia pistaciae (strain Bp).